Reading from the N-terminus, the 660-residue chain is Nuclear factor erythroid 2-related factor 3 (660 aa).

The interval 120–214 (SAVGDGGQSA…KTEEHKMACA (95 aa)) is disordered. Residues 123-135 (GDGGQSASAGGGD) show a composition bias toward gly residues. Basic and acidic residues-rich tracts occupy residues 173-186 (MLRE…HSSQ) and 204-214 (SKTEEHKMACA). The bZIP domain occupies 541–604 (LIRDIRRRGK…DIMRQKLHGL (64 aa)). A basic motif region spans residues 543–562 (RDIRRRGKNKVAAQNCRKRK). A leucine-zipper region spans residues 566 to 573 (ILNLEDDI).

This sequence belongs to the bZIP family. CNC subfamily. In terms of assembly, heterodimer with MAFG, MAFK and other small MAF proteins that binds to the MAF recognition elements (MARE). In terms of tissue distribution, high level expression in brain, thymus, testis and placenta. Medium level expression in uterus, stomach and lung. Low level expression in kidney. No expression in heart, liver, spleen and ovary.

The protein localises to the nucleus. In terms of biological role, activates erythroid-specific, globin gene expression. The sequence is that of Nuclear factor erythroid 2-related factor 3 (Nfe2l3) from Mus musculus (Mouse).